The primary structure comprises 338 residues: MGLEQFKKYPLTFGPTPITSMKRLSKTLGGKVEIFAKREDCNSGLAFGGNKIRKLEYLIPEAIDGGYDTLVSIGGIQSNQTRQVAAVAAHLGLDCVLIQEDWVDYKDTMYDRVGNIELSRIVNADVRLDSSKFDIGIRPSFKNALEELTKKGKKPFPIPAGCSEHPYGGLGFVGCVEEIYEQEKQLGFKFDKIVVCTVTGSSFAGIIVGMALTGRQKDVIGIDASATPEKTKAQVLRIAQNTAKLIGLEKELTESDVNIDTRFAHPAYGIPNEGTIEAIKLCGATEGVLTDPVYEGKSMQGLIHLVRNNEIAEGSKVLYIHLGGAPALSAYSAYFKNT.

The residue at position 51 (Lys-51) is an N6-(pyridoxal phosphate)lysine. Ser-78 serves as the catalytic Nucleophile.

Belongs to the ACC deaminase/D-cysteine desulfhydrase family. Pyridoxal 5'-phosphate serves as cofactor.

It catalyses the reaction 1-aminocyclopropane-1-carboxylate + H2O = 2-oxobutanoate + NH4(+). Catalyzes a cyclopropane ring-opening reaction, the irreversible conversion of 1-aminocyclopropane-1-carboxylate (ACC) to ammonia and alpha-ketobutyrate. The polypeptide is Probable 1-aminocyclopropane-1-carboxylate deaminase (Schizosaccharomyces pombe (strain 972 / ATCC 24843) (Fission yeast)).